The sequence spans 441 residues: G-protein coupled receptor family C group 5 member C (441 aa).

A signal peptide spans 1 to 23; it reads MAIHKALVMCLGLPLFLFPGAWA. At 24-50 the chain is on the extracellular side; it reads QGHVPPGCSQGLNPLYYNLCDRSGAWG. The helical transmembrane segment at 51–71 threads the bilayer; it reads IVLEAVAGAGIVTTFVLTIIL. Residues 72-85 are Cytoplasmic-facing; it reads VASLPFVQDTKKRS. The chain crosses the membrane as a helical span at residues 86 to 106; sequence LLGTQVFFLLGTLGLFCLVFA. The Extracellular portion of the chain corresponds to 107-120; sequence CVVKPDFSTCASRR. The chain crosses the membrane as a helical span at residues 121 to 141; the sequence is FLFGVLFAICFSCLAAHVFAL. Residues 142-155 are Cytoplasmic-facing; that stretch reads NFLARKNHGPRGWV. Residues 156 to 176 traverse the membrane as a helical segment; it reads IFTVALLLTLVEVIINTEWLI. Residues 177–208 are Extracellular-facing; sequence ITLVRGSGEGGPQGNSSAGWAVASPCAIANMD. Asn-191 carries N-linked (GlcNAc...) asparagine glycosylation. A helical transmembrane segment spans residues 209 to 229; that stretch reads FVMALIYVMLLLLGAFLGAWP. Residues 230-241 lie on the Cytoplasmic side of the membrane; it reads ALCGRYKRWRKH. A helical transmembrane segment spans residues 242–262; sequence GVFVLLTTATSVAIWVVWIVM. The Extracellular segment spans residues 263–279; that stretch reads YTYGNKQHNSPTWDDPT. Residues 280 to 300 traverse the membrane as a helical segment; it reads LAIALAANAWAFVLFYVIPEV. Residues 301–441 lie on the Cytoplasmic side of the membrane; that stretch reads SQVTKSSPEQ…QVFRNPYVWD (141 aa). Phosphoserine occurs at positions 344, 383, 403, and 406. The segment at 412 to 441 is disordered; sequence DMYSAQSHQAATPPKDGKNSQVFRNPYVWD. Tyr-414 bears the Phosphotyrosine mark. A Phosphothreonine modification is found at Thr-423.

It belongs to the G-protein coupled receptor 3 family. Expression is highest in the periphery, particularly in the stomach, but also in the kidney, liver, pancreas, and prostate. In brain, levels of expression are generally lower than in the periphery, with the exception of cerebellum, spinal cord, and dorsal root ganglia (DRG).

The protein resides in the cell membrane. The protein localises to the cytoplasmic vesicle membrane. This retinoic acid-inducible G-protein coupled receptor provide evidence for a possible interaction between retinoid and G-protein signaling pathways. The protein is G-protein coupled receptor family C group 5 member C (GPRC5C) of Homo sapiens (Human).